Here is an 87-residue protein sequence, read N- to C-terminus: Small ribosomal subunit protein bS20 (87 aa).

The segment at 1-26 (MANIKSAKKRAIQSEKRRKHNASRRS) is disordered.

The protein belongs to the bacterial ribosomal protein bS20 family.

In terms of biological role, binds directly to 16S ribosomal RNA. This Photorhabdus laumondii subsp. laumondii (strain DSM 15139 / CIP 105565 / TT01) (Photorhabdus luminescens subsp. laumondii) protein is Small ribosomal subunit protein bS20.